A 149-amino-acid polypeptide reads, in one-letter code: Transcriptional regulator MraZ (149 aa).

SpoVT-AbrB domains lie at 7–54 (KYVN…GISH) and 83–126 (ALQL…QPQN).

This sequence belongs to the MraZ family. As to quaternary structure, forms oligomers.

It is found in the cytoplasm. It localises to the nucleoid. The polypeptide is Transcriptional regulator MraZ (Rickettsia canadensis (strain McKiel)).